We begin with the raw amino-acid sequence, 895 residues long: Stonin-2 (895 aa).

Disordered regions lie at residues 15-119, 145-222, and 234-280; these read WVSF…PPHK, SESS…APPV, and EDNE…KSTL. Basic and acidic residues predominate over residues 64–73; sequence SHSEQDDSSE. Positions 145–193 are enriched in polar residues; sequence SESSWTTHSEDTSSPSVAPSYTDLQLINTEEQASGRASGTDSTDNSSSL. The segment covering 241–251 has biased composition (pro residues); sequence PSPPVPSPKKP. T253 is modified (phosphothreonine). A phosphoserine mark is found at S278 and S299. Short sequence motifs (NPF) lie at residues 310 to 312 and 326 to 328; these read NPF. Residues 386–421 are disordered; sequence QIDDPDPVGNTALPDDDPTASVELDAPSPASALSQP. The region spanning 424-557 is the SHD domain; it reads GWPMMLRIPE…DLPVLSMDLS (134 aa). The 308-residue stretch at 565–872 folds into the MHD domain; that stretch reads EEEITVDVRD…AHYSYKVEIE (308 aa). The residue at position 759 (S759) is a Phosphoserine.

It belongs to the Stoned B family. In terms of assembly, interacts with the second C2 domain of synaptotagmins SYT1 and SYT2. Interacts with EPS15, EPS15R and ITSN1. Interacts indirectly with the AP-2 adapter complex. Interacts with TOR1A and COPS4; the interaction controls STON2 protein stability. Phosphorylated in vitro by PKD. In terms of processing, neddylated; deneddylated via its interaction with the COP9 signalosome (CSN) complex through TOR1A and COPS4. Post-translationally, ubiquitinated; leading to its degradation.

The protein resides in the cytoplasm. The protein localises to the membrane. It localises to the synapse. Its subcellular location is the synaptosome. Its function is as follows. Adapter protein involved in endocytic machinery. Involved in the synaptic vesicle recycling. May facilitate clathrin-coated vesicle uncoating. The protein is Stonin-2 (Ston2) of Mus musculus (Mouse).